Consider the following 367-residue polypeptide: Ferrochelatase (367 aa).

Fe cation contacts are provided by H226 and E307.

It belongs to the ferrochelatase family.

It localises to the cytoplasm. The catalysed reaction is heme b + 2 H(+) = protoporphyrin IX + Fe(2+). It participates in porphyrin-containing compound metabolism; protoheme biosynthesis; protoheme from protoporphyrin-IX: step 1/1. Its function is as follows. Catalyzes the ferrous insertion into protoporphyrin IX. This is Ferrochelatase from Burkholderia mallei (strain NCTC 10247).